Consider the following 366-residue polypeptide: Ferredoxin--NADP reductase (366 aa).

FAD-binding residues include Asp51, Gln59, Tyr64, Val104, Phe139, Asp308, and Thr349.

The protein belongs to the ferredoxin--NADP reductase type 2 family. As to quaternary structure, homodimer. Requires FAD as cofactor.

It catalyses the reaction 2 reduced [2Fe-2S]-[ferredoxin] + NADP(+) + H(+) = 2 oxidized [2Fe-2S]-[ferredoxin] + NADPH. In Polaromonas naphthalenivorans (strain CJ2), this protein is Ferredoxin--NADP reductase.